The chain runs to 113 residues: Dolichyl-diphosphooligosaccharide--protein glycosyltransferase subunit DAD1 (113 aa).

Over 1-30 (MGSSAFEVLTFFLKDYKANTPQKLKIIDAY) the chain is Cytoplasmic. The helical transmembrane segment at 31-51 (LLYILLTGINQFLYCCLVGTF) threads the bilayer. Pro52 is a topological domain (lumenal). Residues 53–73 (FNSFLSGFISCVASFVLGVCL) form a helical membrane-spanning segment. The Cytoplasmic portion of the chain corresponds to 74 to 92 (RLQVNPQNSSNFCGIPPER). The chain crosses the membrane as a helical span at residues 93–113 (AFADFIFAHVVLHLVVMNFIG).

Belongs to the DAD/OST2 family. In terms of assembly, component of the oligosaccharyltransferase (OST) complex. As to expression, widely expressed. Greatest expression seen in the epidermis, intermediate expression in the fat body and midgut and mild expression observed in the silk gland.

The protein resides in the endoplasmic reticulum membrane. The protein operates within protein modification; protein glycosylation. Subunit of the oligosaccharyl transferase (OST) complex that catalyzes the initial transfer of a defined glycan (Glc(3)Man(9)GlcNAc(2) in eukaryotes) from the lipid carrier dolichol-pyrophosphate to an asparagine residue within an Asn-X-Ser/Thr consensus motif in nascent polypeptide chains, the first step in protein N-glycosylation. N-glycosylation occurs cotranslationally and the complex associates with the Sec61 complex at the channel-forming translocon complex that mediates protein translocation across the endoplasmic reticulum (ER). All subunits are required for a maximal enzyme activity. The protein is Dolichyl-diphosphooligosaccharide--protein glycosyltransferase subunit DAD1 of Araneus ventricosus (Orbweaver spider).